Reading from the N-terminus, the 231-residue chain is MAGKKVLLVYAHQEPKSFNGSMKQVAVEELSKQGCTVTVSDLYTMNFEPRATRNDVTGALSNPEVFKYGIEAYEAYKKKALTSDILEEQRKVQEADLVIFQFPLYWFSVPAILKGWMDRVLCQGFAFDVPGFYDSGFLKDKLALLSFTTGGTAEMYTKAGVNGDFRYFLWPLQHGTLHFCGFKVLAPQISFGPEVSSEEQRKVMLASWVQRLKSIWKEEPIHCTPSWYFQG.

FAD-binding positions include histidine 12, 18–21 (FNGS), and 104–107 (LYWF). Residue 127–129 (FDV) coordinates substrate. Residues 148–151 (TTGG) and tyrosine 156 contribute to the FAD site. Zn(2+) contacts are provided by histidine 174 and histidine 178. Residue glutamate 194 participates in FAD binding. Phosphoserine is present on serine 197. Position 201 (arginine 201) interacts with FAD. Cysteine 223 is a binding site for Zn(2+).

The protein belongs to the NAD(P)H dehydrogenase (quinone) family. As to quaternary structure, homodimer. Requires Zn(2+) as cofactor. The cofactor is FAD.

The protein localises to the cytoplasm. The catalysed reaction is 1-(beta-D-ribofuranosyl)-1,4-dihydronicotinamide + a quinone + H(+) = beta-nicotinamide D-riboside + a quinol. In terms of biological role, the enzyme apparently serves as a quinone reductase in connection with conjugation reactions of hydroquinones involved in detoxification pathways as well as in biosynthetic processes such as the vitamin K-dependent gamma-carboxylation of glutamate residues in prothrombin synthesis. This chain is Ribosyldihydronicotinamide dehydrogenase [quinone] (Nqo2), found in Rattus norvegicus (Rat).